The primary structure comprises 151 residues: UPF0178 protein YaiI (151 aa).

It belongs to the UPF0178 family.

This chain is UPF0178 protein YaiI, found in Salmonella paratyphi B (strain ATCC BAA-1250 / SPB7).